A 383-amino-acid polypeptide reads, in one-letter code: MQFTLHKTAAGESRARRGTVTVNHGEIRTPAFMPVGTYGTVKGMLPRDIEDIGADIILGNTFHLWLRPGTEVIDKFGGLHQFMNWNKPILTDSGGFQVFSLGAMRKITEEGVAFKSPIDGAKVFLSPEKSMQIQYSLNSDIVMQFDECTPYPATYSEAQKSLELSLRWGQRCVDEHKKLGNTNALFGIVQGSMYEDLRRQSMDGLLEIGFDGYAIGGLSVGEPKEEMISVLNYMPELMPADKPRYLMGVGKPEDILEAVRRGVDMFDCVMPTRNARNGHYFVTGNEDNQGIVRIRNSQYREDQGPLDPECDCYCCQNFSRAYLYHLNKCKEMLGAQLATIHNLRYYQRLMQGIRDAIDEDRFDEFVADFYHRRGQDVPPLELK.

The Proton acceptor role is filled by Asp92. Substrate-binding positions include 92–96, Asp146, Gln190, and Gly217; that span reads DSGGF. An RNA binding region spans residues 248 to 254; it reads GVGKPED. The Nucleophile role is filled by Asp267. The tract at residues 272 to 276 is RNA binding; important for wobble base 34 recognition; that stretch reads TRNAR. Cys310, Cys312, Cys315, and His341 together coordinate Zn(2+).

The protein belongs to the queuine tRNA-ribosyltransferase family. Homodimer. Within each dimer, one monomer is responsible for RNA recognition and catalysis, while the other monomer binds to the replacement base PreQ1. It depends on Zn(2+) as a cofactor.

The enzyme catalyses 7-aminomethyl-7-carbaguanine + guanosine(34) in tRNA = 7-aminomethyl-7-carbaguanosine(34) in tRNA + guanine. The protein operates within tRNA modification; tRNA-queuosine biosynthesis. In terms of biological role, catalyzes the base-exchange of a guanine (G) residue with the queuine precursor 7-aminomethyl-7-deazaguanine (PreQ1) at position 34 (anticodon wobble position) in tRNAs with GU(N) anticodons (tRNA-Asp, -Asn, -His and -Tyr). Catalysis occurs through a double-displacement mechanism. The nucleophile active site attacks the C1' of nucleotide 34 to detach the guanine base from the RNA, forming a covalent enzyme-RNA intermediate. The proton acceptor active site deprotonates the incoming PreQ1, allowing a nucleophilic attack on the C1' of the ribose to form the product. After dissociation, two additional enzymatic reactions on the tRNA convert PreQ1 to queuine (Q), resulting in the hypermodified nucleoside queuosine (7-(((4,5-cis-dihydroxy-2-cyclopenten-1-yl)amino)methyl)-7-deazaguanosine). The polypeptide is Queuine tRNA-ribosyltransferase (Psychrobacter sp. (strain PRwf-1)).